Here is a 1018-residue protein sequence, read N- to C-terminus: Fibronectin-binding protein A (1018 aa).

Positions Met1–Ala36 are cleaved as a signal peptide. The short motif at Tyr7–Ser18 is the YSIRK-G/S signaling motif element. The tract at residues Ala37–Asn511 is ligand-binding A region. Disordered stretches follow at residues Ser38 to Gln61 and Ala78 to Thr195. Composition is skewed to polar residues over residues Glu39–Gln61 and Ala78–Thr92. Residues Thr112–Val126 are compositionally biased toward basic and acidic residues. The span at Thr129–Gln139 shows a compositional bias: polar residues. The tract at residues Gly194–Asn511 is fibrinogen/elastin/tropoelastin-binding. Positions Gly512–Thr872 are fibronectin-binding. The stretch at Glu545–Ile574 is one B-1 repeat. Residues Glu545 to Ser604 are 2 X approximate tandem repeats. The stretch at Glu575–Ser604 is one B-2 repeat. Disordered stretches follow at residues Gly595–His622, Leu740–Phe813, and Glu827–Phe997. The D-1 repeat unit spans residues Gly745–His782. Residues Gly745–Pro878 form a 4 X approximate tandem repeats region. The stretch at Gly783 to His820 is one D-2 repeat. Residues Gly821–Ser859 form a D-3 repeat. Over residues Glu827–Pro838 the composition is skewed to basic and acidic residues. The stretch at Gly860–Pro878 is one D-4; truncated repeat. Positions Pro875–Pro938 are enriched in pro residues. WR repeat units follow at residues Pro879–Thr892, Pro893–Thr906, Pro907–Thr920, Pro921–Lys934, and Pro935–Lys948. The 5 X tandem repeats, Pro-rich (WR) stretch occupies residues Pro879–Lys948. The short motif at Leu982 to Gly986 is the LPXTG sorting signal element. Residue Thr985 is modified to Pentaglycyl murein peptidoglycan amidated threonine. A propeptide spans Gly986–Ala1018 (removed by sortase).

The protein resides in the secreted. The protein localises to the cell wall. Its function is as follows. Promotes bacterial attachment to multiple substrates, such as fibronectin (Fn), fibrinogen (Fg), elastin peptides and tropoelastin. This confers to S.aureus the ability to invade endothelial cells. Promotes adherence to and aggregation of activated platelets. This is Fibronectin-binding protein A from Staphylococcus aureus (strain USA300).